A 169-amino-acid chain; its full sequence is MTIQTLFAASHHIYLGNALWYLICFAILLLLIKHFAWGPVSDMMEKRRQKVINDLDSAASDRKKAETLANEREAALKNSRQEATQILSDAKANAQKTGKEIVASANEDAAAIRKKANEEAAKAKSDALDSARDQVADISLAIAEKVIAKNLSAEDQKDLVDQFIKELDD.

Residues 12 to 32 traverse the membrane as a helical segment; sequence HIYLGNALWYLICFAILLLLI.

This sequence belongs to the ATPase B chain family. In terms of assembly, F-type ATPases have 2 components, F(1) - the catalytic core - and F(0) - the membrane proton channel. F(1) has five subunits: alpha(3), beta(3), gamma(1), delta(1), epsilon(1). F(0) has three main subunits: a(1), b(2) and c(10-14). The alpha and beta chains form an alternating ring which encloses part of the gamma chain. F(1) is attached to F(0) by a central stalk formed by the gamma and epsilon chains, while a peripheral stalk is formed by the delta and b chains.

The protein localises to the cell membrane. Its function is as follows. F(1)F(0) ATP synthase produces ATP from ADP in the presence of a proton or sodium gradient. F-type ATPases consist of two structural domains, F(1) containing the extramembraneous catalytic core and F(0) containing the membrane proton channel, linked together by a central stalk and a peripheral stalk. During catalysis, ATP synthesis in the catalytic domain of F(1) is coupled via a rotary mechanism of the central stalk subunits to proton translocation. Functionally, component of the F(0) channel, it forms part of the peripheral stalk, linking F(1) to F(0). The protein is ATP synthase subunit b of Lactobacillus helveticus (strain DPC 4571).